Reading from the N-terminus, the 377-residue chain is tRNA/tmRNA (uracil-C(5))-methyltransferase (377 aa).

S-adenosyl-L-methionine-binding residues include Gln199, Tyr227, Asn232, Glu248, and Asp308. The active-site Nucleophile is the Cys333. Glu367 acts as the Proton acceptor in catalysis.

This sequence belongs to the class I-like SAM-binding methyltransferase superfamily. RNA M5U methyltransferase family. TrmA subfamily.

The catalysed reaction is uridine(54) in tRNA + S-adenosyl-L-methionine = 5-methyluridine(54) in tRNA + S-adenosyl-L-homocysteine + H(+). It catalyses the reaction uridine(341) in tmRNA + S-adenosyl-L-methionine = 5-methyluridine(341) in tmRNA + S-adenosyl-L-homocysteine + H(+). Its function is as follows. Dual-specificity methyltransferase that catalyzes the formation of 5-methyluridine at position 54 (m5U54) in all tRNAs, and that of position 341 (m5U341) in tmRNA (transfer-mRNA). This chain is tRNA/tmRNA (uracil-C(5))-methyltransferase, found in Aeromonas salmonicida (strain A449).